A 252-amino-acid polypeptide reads, in one-letter code: 2-succinyl-6-hydroxy-2,4-cyclohexadiene-1-carboxylate synthase (252 aa).

The protein belongs to the AB hydrolase superfamily. MenH family. Monomer.

It catalyses the reaction 5-enolpyruvoyl-6-hydroxy-2-succinyl-cyclohex-3-ene-1-carboxylate = (1R,6R)-6-hydroxy-2-succinyl-cyclohexa-2,4-diene-1-carboxylate + pyruvate. The protein operates within quinol/quinone metabolism; 1,4-dihydroxy-2-naphthoate biosynthesis; 1,4-dihydroxy-2-naphthoate from chorismate: step 3/7. Its pathway is quinol/quinone metabolism; menaquinone biosynthesis. Catalyzes a proton abstraction reaction that results in 2,5-elimination of pyruvate from 2-succinyl-5-enolpyruvyl-6-hydroxy-3-cyclohexene-1-carboxylate (SEPHCHC) and the formation of 2-succinyl-6-hydroxy-2,4-cyclohexadiene-1-carboxylate (SHCHC). This is 2-succinyl-6-hydroxy-2,4-cyclohexadiene-1-carboxylate synthase from Klebsiella pneumoniae (strain 342).